A 286-amino-acid polypeptide reads, in one-letter code: Aquaporin NIP1-3 (286 aa).

The disordered stretch occupies residues 1-44 (MAGGEHGVNGQHEETRAMEEGSRDHQARCENSEQDGGSKSSSNN). Positions 11–31 (QHEETRAMEEGSRDHQARCEN) are enriched in basic and acidic residues. A compositionally biased stretch (polar residues) spans 34–44 (QDGGSKSSSNN). Helical transmembrane passes span 56 to 76 (VIAEILGTFFLIFAGCAAVAV) and 84 to 104 (VTFPGICITWGLAVMVMVYSV). The NPA 1 signature appears at 113–115 (NPA). Transmembrane regions (helical) follow at residues 131–153 (VPAYAAAQVAGSAAASAALRALF), 172–192 (SLAMEFIITFYLMFVVSGVAT), and 200–220 (LAGLAVGATVLVNVLFAGPIS). Positions 225 to 227 (NPA) match the NPA 2 motif. A helical transmembrane segment spans residues 239-259 (YTGIWVYIAGPVFGAVAGAWA).

This sequence belongs to the MIP/aquaporin (TC 1.A.8) family. NIP (TC 1.A.8.12) subfamily.

Its subcellular location is the membrane. Functionally, aquaporins facilitate the transport of water and small neutral solutes across cell membranes. The protein is Aquaporin NIP1-3 (NIP1-3) of Oryza sativa subsp. japonica (Rice).